The sequence spans 139 residues: Actin-depolymerizing factor 2 (139 aa).

One can recognise an ADF-H domain in the interval glycine 7 to asparagine 139.

The protein belongs to the actin-binding proteins ADF family. Expressed in pollen.

Functionally, actin-depolymerizing protein. Severs actin filaments (F-actin) and binds to actin monomers. The polypeptide is Actin-depolymerizing factor 2 (ADF2) (Zea mays (Maize)).